The following is a 361-amino-acid chain: Probable sugar phosphate/phosphate translocator At1g12500 (361 aa).

An N-acetylvaline modification is found at Val-2. A run of 9 helical transmembrane segments spans residues 56–76 (TILT…VLLL), 90–110 (IFLT…VINI), 125–145 (FLKI…GNTS), 153–173 (FNQA…FLIT), 192–212 (IVLA…ICVA), 240–260 (LLLY…LYIE), 276–296 (LIIF…LTNF), 306–326 (TLQV…VLIF), and 329–349 (PVTV…VLYS). One can recognise an EamA domain in the interval 89–196 (PIFLTMTHML…PVVSGIVLAS (108 aa)).

This sequence belongs to the TPT transporter family. TPT (TC 2.A.7.9) subfamily.

Its subcellular location is the membrane. This Arabidopsis thaliana (Mouse-ear cress) protein is Probable sugar phosphate/phosphate translocator At1g12500.